The chain runs to 599 residues: Adenine deaminase (599 aa).

Residues 1-31 (MARSNRRGGRGDPEDDPAWAPPGHRCAGERA) form a disordered region.

Belongs to the metallo-dependent hydrolases superfamily. Adenine deaminase family. It depends on Mn(2+) as a cofactor.

It carries out the reaction adenine + H2O + H(+) = hypoxanthine + NH4(+). The polypeptide is Adenine deaminase (Methanopyrus kandleri (strain AV19 / DSM 6324 / JCM 9639 / NBRC 100938)).